We begin with the raw amino-acid sequence, 80 residues long: Small, acid-soluble spore protein Tlp (80 aa).

Belongs to the Tlp family.

It is found in the spore core. The sequence is that of Small, acid-soluble spore protein Tlp from Bacillus pumilus (strain SAFR-032).